A 191-amino-acid polypeptide reads, in one-letter code: dCTP deaminase, dUMP-forming (191 aa).

DCTP is bound by residues 101–106 (KSSLGR), D119, 127–129 (TLE), Q148, Y162, and Q174. E129 serves as the catalytic Proton donor/acceptor. Residues 163–191 (GSAKYGSRYQGQRGPTPSRSYQNFHRTPI) are disordered. Over residues 171 to 191 (YQGQRGPTPSRSYQNFHRTPI) the composition is skewed to polar residues.

This sequence belongs to the dCTP deaminase family. Homotrimer.

It catalyses the reaction dCTP + 2 H2O = dUMP + NH4(+) + diphosphate. The protein operates within pyrimidine metabolism; dUMP biosynthesis; dUMP from dCTP: step 1/1. Bifunctional enzyme that catalyzes both the deamination of dCTP to dUTP and the hydrolysis of dUTP to dUMP without releasing the toxic dUTP intermediate. This Nocardioides sp. (strain ATCC BAA-499 / JS614) protein is dCTP deaminase, dUMP-forming.